Consider the following 118-residue polypeptide: Large ribosomal subunit protein uL18 (118 aa).

The segment at 1 to 24 (MISKPDKNKIRQKRHRRVRGKLSG) is disordered. A compositionally biased stretch (basic residues) spans 10 to 20 (IRQKRHRRVRG).

It belongs to the universal ribosomal protein uL18 family. Part of the 50S ribosomal subunit; part of the 5S rRNA/L5/L18/L25 subcomplex. Contacts the 5S and 23S rRNAs.

Functionally, this is one of the proteins that bind and probably mediate the attachment of the 5S RNA into the large ribosomal subunit, where it forms part of the central protuberance. The chain is Large ribosomal subunit protein uL18 from Streptococcus agalactiae serotype III (strain NEM316).